The following is a 174-amino-acid chain: Shikimate kinase (174 aa).

15-20 provides a ligand contact to ATP; the sequence is GTGKST. Serine 19 is a Mg(2+) binding site. 3 residues coordinate substrate: aspartate 37, arginine 61, and glycine 82. Arginine 120 is an ATP binding site. Position 138 (arginine 138) interacts with substrate.

Belongs to the shikimate kinase family. In terms of assembly, monomer. The cofactor is Mg(2+).

It is found in the cytoplasm. It catalyses the reaction shikimate + ATP = 3-phosphoshikimate + ADP + H(+). Its pathway is metabolic intermediate biosynthesis; chorismate biosynthesis; chorismate from D-erythrose 4-phosphate and phosphoenolpyruvate: step 5/7. Its function is as follows. Catalyzes the specific phosphorylation of the 3-hydroxyl group of shikimic acid using ATP as a cosubstrate. The protein is Shikimate kinase of Staphylococcus aureus (strain NCTC 8325 / PS 47).